The chain runs to 633 residues: Chaperone protein HtpG (633 aa).

The tract at residues 1-344 (MSLQPQAETL…SNDLPLNISR (344 aa)) is a; substrate-binding. Residues 345-560 (ELLQSNEVIN…ENEMSGHLQR (216 aa)) are b. The interval 561–633 (LLIQTGQDFM…KGLNELLLDS (73 aa)) is c.

It belongs to the heat shock protein 90 family. Homodimer.

The protein localises to the cytoplasm. Molecular chaperone. Has ATPase activity. In Coxiella burnetii (strain RSA 331 / Henzerling II), this protein is Chaperone protein HtpG.